A 300-amino-acid chain; its full sequence is NAD kinase (300 aa).

The Proton acceptor role is filled by Asp-78. Residues 78–79 (DG), 152–153 (ND), His-163, Arg-180, Asp-182, and 193–198 (TAYALS) contribute to the NAD(+) site.

It belongs to the NAD kinase family. A divalent metal cation is required as a cofactor.

It localises to the cytoplasm. The enzyme catalyses NAD(+) + ATP = ADP + NADP(+) + H(+). Involved in the regulation of the intracellular balance of NAD and NADP, and is a key enzyme in the biosynthesis of NADP. Catalyzes specifically the phosphorylation on 2'-hydroxyl of the adenosine moiety of NAD to yield NADP. This chain is NAD kinase, found in Alcanivorax borkumensis (strain ATCC 700651 / DSM 11573 / NCIMB 13689 / SK2).